The primary structure comprises 132 residues: UPF0299 membrane protein Ent638_2744 (132 aa).

Transmembrane regions (helical) follow at residues 8–28 (VWQYLRAFILIYACLYAGIFI), 31–51 (LLPITIPGSIIGMLIMFLLLA), 63–83 (GCFVLIRYMALLFVPIGVGVM), and 93–113 (FGPIVVSCAISTLVVFLVVSW).

The protein belongs to the UPF0299 family.

Its subcellular location is the cell inner membrane. This is UPF0299 membrane protein Ent638_2744 from Enterobacter sp. (strain 638).